Here is a 113-residue protein sequence, read N- to C-terminus: MNTVRVTFLLVFVLAVSLGRADKEENRMEMQEKTEQGKSYLDFAENLLLQKLEELEAKLLEEDSEESRNSRQKRCIGEGVPCDENDPRCCSGLVCLKPTLHGIWYKSYYCYKK.

An N-terminal signal peptide occupies residues 1–21 (MNTVRVTFLLVFVLAVSLGRA). Positions 22 to 74 (DKEENRMEMQEKTEQGKSYLDFAENLLLQKLEELEAKLLEEDSEESRNSRQKR) are excised as a propeptide. The disordered stretch occupies residues 61–83 (EEDSEESRNSRQKRCIGEGVPCD). 3 disulfides stabilise this stretch: cysteine 75-cysteine 90, cysteine 82-cysteine 95, and cysteine 89-cysteine 110.

Belongs to the neurotoxin 14 (magi-1) family. 01 (HNTX-16) subfamily. Expressed by the venom gland.

It is found in the secreted. Functionally, probable ion channel inhibitor. The chain is U11-theraphotoxin-Hhn1a from Cyriopagopus hainanus (Chinese bird spider).